The following is a 128-amino-acid chain: Ribonuclease P protein component (128 aa).

The protein belongs to the RnpA family. Consists of a catalytic RNA component (M1 or rnpB) and a protein subunit.

It catalyses the reaction Endonucleolytic cleavage of RNA, removing 5'-extranucleotides from tRNA precursor.. Functionally, RNaseP catalyzes the removal of the 5'-leader sequence from pre-tRNA to produce the mature 5'-terminus. It can also cleave other RNA substrates such as 4.5S RNA. The protein component plays an auxiliary but essential role in vivo by binding to the 5'-leader sequence and broadening the substrate specificity of the ribozyme. The protein is Ribonuclease P protein component of Prochlorococcus marinus (strain MIT 9215).